The sequence spans 286 residues: Putative sugar uptake protein lmo0176 (286 aa).

8 helical membrane passes run 4–26 (MIALIPALLWGTVPLIITKFGGS), 33–55 (GMTLGALTFAVIVFFFTDPVYTL), 114–136 (LRIILGFIALALIVGGIFLTSYA), 149–167 (GLITLFISACGYVGLVVLI), 177–194 (AILPQAIGMVISALIMTH), 207–226 (LLLTIPGVIWAAGNVAMVHA), 230–252 (VGVATGFSLSQLGVVISTIGGII), and 264–283 (LFVIVGVVLVVLGGILIGVA).

It belongs to the GRP transporter (TC 2.A.7.5) family.

Its subcellular location is the cell membrane. The polypeptide is Putative sugar uptake protein lmo0176 (Listeria monocytogenes serovar 1/2a (strain ATCC BAA-679 / EGD-e)).